The primary structure comprises 98 residues: Cystatin-A (98 aa).

At Met1 the chain carries N-acetylmethionine. The Secondary area of contact motif lies at 46–50 (QVVAG).

It belongs to the cystatin family.

The protein localises to the cytoplasm. In terms of biological role, this is an intracellular thiol proteinase inhibitor. This chain is Cystatin-A (CSTA), found in Bos taurus (Bovine).